Here is a 129-residue protein sequence, read N- to C-terminus: Chorion class A protein L11 (129 aa).

Residues M1–G21 form the signal peptide. The interval Q22–G64 is left arm. A central domain region spans residues G65–I112. The interval C113 to Y129 is right arm.

It belongs to the chorion protein family.

In terms of biological role, this protein is one of many from the eggshell of the silk moth. This Bombyx mori (Silk moth) protein is Chorion class A protein L11.